The following is a 76-amino-acid chain: MLKELINKLLWHPDYNPEDYIINYLHRGAENDEKSVPLKNIVIEDSFLVFDETHIPFHRILEIVNTKTGEIIYKKR.

The protein belongs to the UPF0248 family.

In Methanococcus maripaludis (strain DSM 14266 / JCM 13030 / NBRC 101832 / S2 / LL), this protein is UPF0248 protein MMP0286.